A 511-amino-acid chain; its full sequence is Rab proteins geranylgeranyltransferase component A (511 aa).

This sequence belongs to the Rab GDI family.

The protein resides in the cytoplasm. It localises to the perinuclear region. Its subcellular location is the cytoskeleton. It is found in the spindle pole. In terms of biological role, binds unprenylated Rab proteins, presents it to the catalytic component B, and remains bound to it after the geranylgeranyl transfer reaction. The component A is thought to be regenerated by transferring its prenylated Rab to a protein acceptor. This Drosophila melanogaster (Fruit fly) protein is Rab proteins geranylgeranyltransferase component A.